Reading from the N-terminus, the 119-residue chain is Ribonuclease P protein component (119 aa).

It belongs to the RnpA family. Consists of a catalytic RNA component (M1 or rnpB) and a protein subunit.

The catalysed reaction is Endonucleolytic cleavage of RNA, removing 5'-extranucleotides from tRNA precursor.. RNaseP catalyzes the removal of the 5'-leader sequence from pre-tRNA to produce the mature 5'-terminus. It can also cleave other RNA substrates such as 4.5S RNA. The protein component plays an auxiliary but essential role in vivo by binding to the 5'-leader sequence and broadening the substrate specificity of the ribozyme. The polypeptide is Ribonuclease P protein component (Borreliella burgdorferi (strain ATCC 35210 / DSM 4680 / CIP 102532 / B31) (Borrelia burgdorferi)).